We begin with the raw amino-acid sequence, 177 residues long: MSRVGKMPIALPSGAEATITAAQITVKGPLGSLTQSLNGLVNIENDNGTLNFKVANDSREANAMSGTLRALVNNMVNGVTKGFEKKLTLVGVGYRAAAQGDKLNLSLGFSHPVVHQMPQGVKVETPTQTEILIKGIDRQKVGQVAAEVRAYREPEPYKGKGVRYSDEVVVIKETKKK.

This sequence belongs to the universal ribosomal protein uL6 family. In terms of assembly, part of the 50S ribosomal subunit.

This protein binds to the 23S rRNA, and is important in its secondary structure. It is located near the subunit interface in the base of the L7/L12 stalk, and near the tRNA binding site of the peptidyltransferase center. The chain is Large ribosomal subunit protein uL6 from Janthinobacterium sp. (strain Marseille) (Minibacterium massiliensis).